The primary structure comprises 143 residues: D-aminoacyl-tRNA deacylase (143 aa).

The Gly-cisPro motif, important for rejection of L-amino acids motif lies at 135–136; sequence GP.

The protein belongs to the DTD family. As to quaternary structure, homodimer.

It is found in the cytoplasm. It catalyses the reaction glycyl-tRNA(Ala) + H2O = tRNA(Ala) + glycine + H(+). The enzyme catalyses a D-aminoacyl-tRNA + H2O = a tRNA + a D-alpha-amino acid + H(+). Functionally, an aminoacyl-tRNA editing enzyme that deacylates mischarged D-aminoacyl-tRNAs. Also deacylates mischarged glycyl-tRNA(Ala), protecting cells against glycine mischarging by AlaRS. Acts via tRNA-based rather than protein-based catalysis; rejects L-amino acids rather than detecting D-amino acids in the active site. By recycling D-aminoacyl-tRNA to D-amino acids and free tRNA molecules, this enzyme counteracts the toxicity associated with the formation of D-aminoacyl-tRNA entities in vivo and helps enforce protein L-homochirality. The chain is D-aminoacyl-tRNA deacylase from Mycolicibacterium paratuberculosis (strain ATCC BAA-968 / K-10) (Mycobacterium paratuberculosis).